Here is a 236-residue protein sequence, read N- to C-terminus: Ribose-5-phosphate isomerase A (236 aa).

Residues 31 to 34 (TGST), 88 to 91 (DGAD), and 101 to 104 (KGGG) each bind substrate. The active-site Proton acceptor is glutamate 110. A substrate-binding site is contributed by lysine 128.

Belongs to the ribose 5-phosphate isomerase family. In terms of assembly, homodimer.

The catalysed reaction is aldehydo-D-ribose 5-phosphate = D-ribulose 5-phosphate. It functions in the pathway carbohydrate degradation; pentose phosphate pathway; D-ribose 5-phosphate from D-ribulose 5-phosphate (non-oxidative stage): step 1/1. Catalyzes the reversible conversion of ribose-5-phosphate to ribulose 5-phosphate. This is Ribose-5-phosphate isomerase A from Thermosynechococcus vestitus (strain NIES-2133 / IAM M-273 / BP-1).